The following is a 177-amino-acid chain: NAD(P)H-quinone oxidoreductase subunit 6, chloroplastic (177 aa).

A run of 5 helical transmembrane segments spans residues 10 to 30, 32 to 52, 61 to 81, 92 to 112, and 152 to 172; these read FLLVFLGLGFIMGGLGVVLLT, PIFSAFSLGLVLVCTSLFYTP, AQLLIYVGAINVLIIFAVMFM, LWTVGDGVTSLVCTSIFVSLI, and FFLPFELISIILLVALIGAIS.

The protein belongs to the complex I subunit 6 family. NDH is composed of at least 16 different subunits, 5 of which are encoded in the nucleus.

It is found in the plastid. Its subcellular location is the chloroplast thylakoid membrane. It carries out the reaction a plastoquinone + NADH + (n+1) H(+)(in) = a plastoquinol + NAD(+) + n H(+)(out). It catalyses the reaction a plastoquinone + NADPH + (n+1) H(+)(in) = a plastoquinol + NADP(+) + n H(+)(out). In terms of biological role, NDH shuttles electrons from NAD(P)H:plastoquinone, via FMN and iron-sulfur (Fe-S) centers, to quinones in the photosynthetic chain and possibly in a chloroplast respiratory chain. The immediate electron acceptor for the enzyme in this species is believed to be plastoquinone. Couples the redox reaction to proton translocation, and thus conserves the redox energy in a proton gradient. This is NAD(P)H-quinone oxidoreductase subunit 6, chloroplastic (ndhG) from Ranunculus macranthus (Large buttercup).